We begin with the raw amino-acid sequence, 963 residues long: VPS35 endosomal protein-sorting factor-like (963 aa).

A disordered region spans residues 43-112 (SKTKKVSRKG…DKDENSFVGP (70 aa)). Positions 51 to 72 (KGSTSSTSSSSSSSVIDPLSSV) are enriched in low complexity. Position 265 is a phosphoserine (S265). The helical transmembrane segment at 699-719 (AFVRACVAYCFITIPSLVGIF) threads the bilayer.

It belongs to the VPS35L family. Component of the heterotrimeric retriever complex formed by VPS26C, VPS29 and VPS35L. Interacts with VPS29. Interacts with COMMD1, CCDC93 and CCDC22; associates with the CCC (COMMD/CCDC22/CCDC93) complex which contains at least COMMD1 (and possibly other COMM domain-containing proteins), CCDC22 and CCDC93. Interacts with WASHC1, WASHC2A and WASHC2C. Interacts with SNX17 and SNX31.

Its subcellular location is the membrane. The protein localises to the endosome. In terms of biological role, acts as a component of the retriever complex. The retriever complex is a heterotrimeric complex related to retromer cargo-selective complex (CSC) and essential for retromer-independent retrieval and recycling of numerous cargos such as integrin alpha-5/beta-1 (ITGA5:ITGB1). The recruitment of the retriever complex to the endosomal membrane involves CCC and WASH complexes. In the endosomes, drives the retrieval and recycling of NxxY-motif-containing cargo proteins by coupling to SNX17, a cargo essential for the homeostatic maintenance of numerous cell surface proteins associated with processes that include cell migration, cell adhesion, nutrient supply and cell signaling. Involved in copper-dependent ATP7A trafficking between the trans-Golgi network and vesicles in the cell periphery; the function is proposed to depend on its association with the CCC complex and cooperation with the WASH complex on early endosomes. Seems not to be required for CCC complex stability. This chain is VPS35 endosomal protein-sorting factor-like, found in Mus musculus (Mouse).